Consider the following 162-residue polypeptide: Cytochrome c-type biogenesis protein CcmE (162 aa).

Residues 1–7 (MTRKQRR) are Cytoplasmic-facing. A helical; Signal-anchor for type II membrane protein membrane pass occupies residues 8–28 (LTMIGGSLVVLAIAAALVLNA). Residues 29–162 (LRDSIVFFST…EASGKQGVSQ (134 aa)) lie on the Periplasmic side of the membrane. Heme is bound by residues His122 and Tyr126. A disordered region spans residues 138–162 (QGHWKDDYGPQAGAVEASGKQGVSQ).

This sequence belongs to the CcmE/CycJ family.

The protein localises to the cell inner membrane. Its function is as follows. Heme chaperone required for the biogenesis of c-type cytochromes. Transiently binds heme delivered by CcmC and transfers the heme to apo-cytochromes in a process facilitated by CcmF and CcmH. The chain is Cytochrome c-type biogenesis protein CcmE from Nitrobacter hamburgensis (strain DSM 10229 / NCIMB 13809 / X14).